Reading from the N-terminus, the 79-residue chain is Protein FAM236C (79 aa).

The interval 19 to 48 (KGPQKDPEELVAVSDTAEDPSSGTGLPREP) is disordered.

The protein belongs to the FAM236 family.

The chain is Protein FAM236C from Homo sapiens (Human).